Reading from the N-terminus, the 153-residue chain is Ribosomal RNA large subunit methyltransferase H (153 aa).

S-adenosyl-L-methionine-binding positions include leucine 70, glycine 102, and leucine 121–phenylalanine 126.

The protein belongs to the RNA methyltransferase RlmH family. As to quaternary structure, homodimer.

The protein resides in the cytoplasm. The enzyme catalyses pseudouridine(1915) in 23S rRNA + S-adenosyl-L-methionine = N(3)-methylpseudouridine(1915) in 23S rRNA + S-adenosyl-L-homocysteine + H(+). Functionally, specifically methylates the pseudouridine at position 1915 (m3Psi1915) in 23S rRNA. The sequence is that of Ribosomal RNA large subunit methyltransferase H from Trichlorobacter lovleyi (strain ATCC BAA-1151 / DSM 17278 / SZ) (Geobacter lovleyi).